Here is a 210-residue protein sequence, read N- to C-terminus: Proteasome subunit beta (210 aa).

Residues 1–9 constitute a propeptide, removed in mature form; by autocatalysis; sequence MNDKNTLKG. The Nucleophile role is filled by Thr-10.

It belongs to the peptidase T1B family. As to quaternary structure, the 20S proteasome core is composed of 14 alpha and 14 beta subunits that assemble into four stacked heptameric rings, resulting in a barrel-shaped structure. The two inner rings, each composed of seven catalytic beta subunits, are sandwiched by two outer rings, each composed of seven alpha subunits. The catalytic chamber with the active sites is on the inside of the barrel. Has a gated structure, the ends of the cylinder being occluded by the N-termini of the alpha-subunits. Is capped at one or both ends by the proteasome regulatory ATPase, PAN.

The protein localises to the cytoplasm. It catalyses the reaction Cleavage of peptide bonds with very broad specificity.. The formation of the proteasomal ATPase PAN-20S proteasome complex, via the docking of the C-termini of PAN into the intersubunit pockets in the alpha-rings, triggers opening of the gate for substrate entry. Interconversion between the open-gate and close-gate conformations leads to a dynamic regulation of the 20S proteasome proteolysis activity. Its function is as follows. Component of the proteasome core, a large protease complex with broad specificity involved in protein degradation. The protein is Proteasome subunit beta of Methanothermobacter thermautotrophicus (strain ATCC 29096 / DSM 1053 / JCM 10044 / NBRC 100330 / Delta H) (Methanobacterium thermoautotrophicum).